We begin with the raw amino-acid sequence, 103 residues long: Large ribosomal subunit protein bL21 (103 aa).

The protein belongs to the bacterial ribosomal protein bL21 family. As to quaternary structure, part of the 50S ribosomal subunit. Contacts protein L20.

This protein binds to 23S rRNA in the presence of protein L20. This is Large ribosomal subunit protein bL21 from Albidiferax ferrireducens (strain ATCC BAA-621 / DSM 15236 / T118) (Rhodoferax ferrireducens).